A 177-amino-acid polypeptide reads, in one-letter code: ATP synthase subunit delta (177 aa).

The protein belongs to the ATPase delta chain family. In terms of assembly, F-type ATPases have 2 components, F(1) - the catalytic core - and F(0) - the membrane proton channel. F(1) has five subunits: alpha(3), beta(3), gamma(1), delta(1), epsilon(1). F(0) has three main subunits: a(1), b(2) and c(10-14). The alpha and beta chains form an alternating ring which encloses part of the gamma chain. F(1) is attached to F(0) by a central stalk formed by the gamma and epsilon chains, while a peripheral stalk is formed by the delta and b chains.

The protein localises to the cell inner membrane. Functionally, f(1)F(0) ATP synthase produces ATP from ADP in the presence of a proton or sodium gradient. F-type ATPases consist of two structural domains, F(1) containing the extramembraneous catalytic core and F(0) containing the membrane proton channel, linked together by a central stalk and a peripheral stalk. During catalysis, ATP synthesis in the catalytic domain of F(1) is coupled via a rotary mechanism of the central stalk subunits to proton translocation. In terms of biological role, this protein is part of the stalk that links CF(0) to CF(1). It either transmits conformational changes from CF(0) to CF(1) or is implicated in proton conduction. This Shewanella piezotolerans (strain WP3 / JCM 13877) protein is ATP synthase subunit delta.